Here is a 147-residue protein sequence, read N- to C-terminus: uncharacterized protein (147 aa).

This is an uncharacterized protein from Archaeoglobus fulgidus (strain ATCC 49558 / DSM 4304 / JCM 9628 / NBRC 100126 / VC-16).